We begin with the raw amino-acid sequence, 232 residues long: Small ribosomal subunit protein uS3 (232 aa).

The region spanning 39 to 107 is the KH type-2 domain; that stretch reads IRAFLKKKLY…EVNVNIKEER (69 aa). Residues 211-232 are disordered; it reads GVQPEKTEEEAPKKTRRARRGK. A compositionally biased stretch (basic and acidic residues) spans 213–223; that stretch reads QPEKTEEEAPK.

This sequence belongs to the universal ribosomal protein uS3 family. In terms of assembly, part of the 30S ribosomal subunit. Forms a tight complex with proteins S10 and S14.

Functionally, binds the lower part of the 30S subunit head. Binds mRNA in the 70S ribosome, positioning it for translation. This Campylobacter concisus (strain 13826) protein is Small ribosomal subunit protein uS3.